The following is a 130-amino-acid chain: MTLLDPLANALSHITNSEKVGKSEVYIKPASKLIGEVLRVMQENGYIGEFEFIDDGRAGIYRVQLLGKVNKAGAIKPRFSVKAKEYEKWEKRFLPAFEFGILVVSTSQGVMTHKEALEKGIGGRLIAYVY.

Belongs to the universal ribosomal protein uS8 family. In terms of assembly, part of the 30S ribosomal subunit.

One of the primary rRNA binding proteins, it binds directly to 16S rRNA central domain where it helps coordinate assembly of the platform of the 30S subunit. This chain is Small ribosomal subunit protein uS8, found in Thermococcus sibiricus (strain DSM 12597 / MM 739).